The sequence spans 317 residues: tRNA-dihydrouridine(20a/20b) synthase [NAD(P)+]-like (317 aa).

Residues 33–35 and Gln87 contribute to the FMN site; that span reads PMV. Cys116 functions as the Proton donor in the catalytic mechanism. FMN is bound by residues Lys158, His186, 216–218, and 240–241; these read NGD and AR.

Belongs to the Dus family. Dus4 subfamily. Requires FMN as cofactor.

It carries out the reaction 5,6-dihydrouridine(20a) in tRNA + NADP(+) = uridine(20a) in tRNA + NADPH + H(+). It catalyses the reaction 5,6-dihydrouridine(20a) in tRNA + NAD(+) = uridine(20a) in tRNA + NADH + H(+). The enzyme catalyses 5,6-dihydrouridine(20b) in tRNA + NAD(+) = uridine(20b) in tRNA + NADH + H(+). The catalysed reaction is 5,6-dihydrouridine(20b) in tRNA + NADP(+) = uridine(20b) in tRNA + NADPH + H(+). In terms of biological role, catalyzes the synthesis of dihydrouridine, a modified base found in the D-loop of most tRNAs. The protein is tRNA-dihydrouridine(20a/20b) synthase [NAD(P)+]-like (DUS4L) of Homo sapiens (Human).